Consider the following 122-residue polypeptide: Ribosome-binding factor A (122 aa).

The protein belongs to the RbfA family. As to quaternary structure, monomer. Binds 30S ribosomal subunits, but not 50S ribosomal subunits or 70S ribosomes.

The protein resides in the cytoplasm. One of several proteins that assist in the late maturation steps of the functional core of the 30S ribosomal subunit. Associates with free 30S ribosomal subunits (but not with 30S subunits that are part of 70S ribosomes or polysomes). Required for efficient processing of 16S rRNA. May interact with the 5'-terminal helix region of 16S rRNA. In Syntrophomonas wolfei subsp. wolfei (strain DSM 2245B / Goettingen), this protein is Ribosome-binding factor A.